The following is a 661-amino-acid chain: Fusaric acid cluster transcription factor FUB12 (661 aa).

Residues 17–48 constitute a DNA-binding region (zn(2)-C6 fungal-type); the sequence is CVPCRTRKIKCNAAVVGLPCGSCVSRECPDEC. Disordered stretches follow at residues 57-131 and 151-185; these read TVKG…RPPG and SAAQTDASDHQSNDEPDDSFNSQIHHWNPPPQLDD. Residues 73–98 are compositionally biased toward polar residues; the sequence is PDTNGSILSPRQQQLPTNVSRQTTDS. Over residues 99 to 109 the composition is skewed to basic and acidic residues; sequence SHSDPVEESIH. A compositionally biased stretch (polar residues) spans 110 to 119; that stretch reads ASHTGSSLRN. A compositionally biased stretch (basic and acidic residues) spans 120–129; that stretch reads DTPHSRDRRP.

It is found in the nucleus. Functionally, transcription factor that is involved in the formation of the two Fusaric acid derivatives, dehydrofusaric acid and fusarinolic acid, serving as a detoxification mechanism. This chain is Fusaric acid cluster transcription factor FUB12, found in Gibberella fujikuroi (strain CBS 195.34 / IMI 58289 / NRRL A-6831) (Bakanae and foot rot disease fungus).